Here is a 179-residue protein sequence, read N- to C-terminus: MNRLKEKYVKEVVPALMSKFNYKSIMQVPKIEKIVINMGVGDAVQNPKALDSAVEELTLIAGQRPVVTRAKKSIAGFRLRQGMPIGAKVTLRGERMYEFLDKLISVSLPRVRDFRGVSKKAFDGRGNYTLGIKEQLIFPEIDYDKVNKVRGMDIVIVTTANTDEEARELLALLGMPFQK.

Contacts the P site tRNA. Forms a bridge to the 30S subunit in the 70S ribosome. Part of the 50S ribosomal subunit. Part of the 5S rRNA/L5/L18 subcomplex; in this organism only 2 proteins, L5 and L18 have been shown to be part of the 5S rRNA subcomplex, unlike E.coli and T.thermophilus where L25 (TL5) is also found. Has been shown to bind 5S rRNA.

Its function is as follows. This is one of the proteins that bind and probably mediate the attachment of the 5S RNA into the large ribosomal subunit, where it forms part of the central protuberance. In the 70S ribosome it contacts protein S13 of the 30S subunit (bridge B1b), connecting the 2 subunits; this bridge is implicated in subunit movement. Contacts the P site tRNA; the 5S rRNA and some of its associated proteins might help stabilize positioning of ribosome-bound tRNAs. The sequence is that of Large ribosomal subunit protein uL5 (rplE) from Geobacillus stearothermophilus (Bacillus stearothermophilus).